A 124-amino-acid chain; its full sequence is Non-structural protein 2 (124 aa).

Residues 121–124 carry the DLNP; interaction with MAP1B motif; the sequence is DLNP.

This sequence belongs to the pneumovirus non-structural protein 2 family. Monomer (instable). Homomultimer. Heteromultimer with NS1. Interacts with host RIGI (via N-terminus); this interaction prevents host signaling pathway involved in interferon production. Interacts with host MAP1B/microtubule-associated protein 1B.

The protein localises to the host mitochondrion. Its function is as follows. Plays a major role in antagonizing the type I IFN-mediated antiviral response. Acts cooperatively with NS1 to repress activation and nuclear translocation of host IFN-regulatory factor IRF3. Interacts with the host cytoplasmic sensor of viral nucleic acids RIGI and prevents the interaction with its downstream partner MAVS. Together with NS2, participates in the proteasomal degradation of host STAT2, IRF3, IRF7, TBK1 and RIGI through a NS-degradasome involving CUL2 and Elongin-C. The degradasome requires an intact mitochondrial MAVS. Induces host SOCS1 expression. Induces activation of NF-kappa-B. Suppresses premature apoptosis by an NF-kappa-B-dependent, interferon-independent mechanism promoting continued viral replication. The polypeptide is Non-structural protein 2 (1B) (Human respiratory syncytial virus B (strain 18537)).